We begin with the raw amino-acid sequence, 78 residues long: Ferredoxin oxidoreductase 2 subunit ForD (78 aa).

4Fe-4S ferredoxin-type domains follow at residues 3–35 (FVADVKEKECAQYNCKQCVLFCPEPNCLNFKAS) and 37–66 (NSAWVWYDRCKGCEICVYVCSDLLKRHCIE). Residues Cys12, Cys17, Cys20, Cys24, Cys46, Cys49, Cys52, and Cys56 each coordinate [4Fe-4S] cluster.

As to quaternary structure, heterotetramer of one alpha, one beta, one delta and one gamma chain. Requires [4Fe-4S] cluster as cofactor.

The polypeptide is Ferredoxin oxidoreductase 2 subunit ForD (forD2) (Aquifex aeolicus (strain VF5)).